Here is a 138-residue protein sequence, read N- to C-terminus: Small ribosomal subunit protein uS11c (138 aa).

The tract at residues 1 to 22 (MAKAIPKISSRRNGRISSRKGA) is disordered. Basic residues predominate over residues 9 to 22 (SSRRNGRISSRKGA).

This sequence belongs to the universal ribosomal protein uS11 family. Part of the 30S ribosomal subunit.

Its subcellular location is the plastid. It localises to the chloroplast. This is Small ribosomal subunit protein uS11c from Solanum bulbocastanum (Wild potato).